The following is a 233-amino-acid chain: MFRIVKWLIALPVGIFIFFNAYVYGNIITYRAVAPHRTAFMSMRMKQFEQEGRDVALDYRWVPYNRISVNLKKALIASEDAHFAGHGGFDWGGIQNAIRRNRNSGKVKAGGSTISQQLAKNLFLNESRSYIRKGEEAAITAMMEAVTDKDRIFELYLNSIEWHYGVFGAEAASRYFYQIPAAKLTKQQAAKLTARVPAPLYYADHPKSKRLRNKTNIVLRRMGSAELPESDTD.

Residues 8–28 traverse the membrane as a helical segment; the sequence is LIALPVGIFIFFNAYVYGNII.

This sequence belongs to the glycosyltransferase 51 family.

It is found in the cell inner membrane. The enzyme catalyses [GlcNAc-(1-&gt;4)-Mur2Ac(oyl-L-Ala-gamma-D-Glu-L-Lys-D-Ala-D-Ala)](n)-di-trans,octa-cis-undecaprenyl diphosphate + beta-D-GlcNAc-(1-&gt;4)-Mur2Ac(oyl-L-Ala-gamma-D-Glu-L-Lys-D-Ala-D-Ala)-di-trans,octa-cis-undecaprenyl diphosphate = [GlcNAc-(1-&gt;4)-Mur2Ac(oyl-L-Ala-gamma-D-Glu-L-Lys-D-Ala-D-Ala)](n+1)-di-trans,octa-cis-undecaprenyl diphosphate + di-trans,octa-cis-undecaprenyl diphosphate + H(+). It participates in cell wall biogenesis; peptidoglycan biosynthesis. In terms of biological role, peptidoglycan polymerase that catalyzes glycan chain elongation from lipid-linked precursors. The protein is Biosynthetic peptidoglycan transglycosylase of Neisseria meningitidis serogroup C / serotype 2a (strain ATCC 700532 / DSM 15464 / FAM18).